The sequence spans 95 residues: MQIDDALLSKLEKLSSLKINDDKREEIKRQLSEIVSFVDVLNELDLKGSEAVVSSIKGGTLLREDSPIASDVIDIILKNAPSQEGHFFSVPKIIE.

It belongs to the GatC family. In terms of assembly, heterotrimer of A, B and C subunits.

The enzyme catalyses L-glutamyl-tRNA(Gln) + L-glutamine + ATP + H2O = L-glutaminyl-tRNA(Gln) + L-glutamate + ADP + phosphate + H(+). The catalysed reaction is L-aspartyl-tRNA(Asn) + L-glutamine + ATP + H2O = L-asparaginyl-tRNA(Asn) + L-glutamate + ADP + phosphate + 2 H(+). Allows the formation of correctly charged Asn-tRNA(Asn) or Gln-tRNA(Gln) through the transamidation of misacylated Asp-tRNA(Asn) or Glu-tRNA(Gln) in organisms which lack either or both of asparaginyl-tRNA or glutaminyl-tRNA synthetases. The reaction takes place in the presence of glutamine and ATP through an activated phospho-Asp-tRNA(Asn) or phospho-Glu-tRNA(Gln). In Campylobacter curvus (strain 525.92), this protein is Aspartyl/glutamyl-tRNA(Asn/Gln) amidotransferase subunit C.